A 236-amino-acid polypeptide reads, in one-letter code: 2,3,4,5-tetrahydropyridine-2,6-dicarboxylate N-acetyltransferase (236 aa).

This sequence belongs to the transferase hexapeptide repeat family. DapH subfamily.

It carries out the reaction (S)-2,3,4,5-tetrahydrodipicolinate + acetyl-CoA + H2O = L-2-acetamido-6-oxoheptanedioate + CoA. It functions in the pathway amino-acid biosynthesis; L-lysine biosynthesis via DAP pathway; LL-2,6-diaminopimelate from (S)-tetrahydrodipicolinate (acetylase route): step 1/3. In terms of biological role, catalyzes the transfer of an acetyl group from acetyl-CoA to tetrahydrodipicolinate. The sequence is that of 2,3,4,5-tetrahydropyridine-2,6-dicarboxylate N-acetyltransferase from Geobacillus thermodenitrificans (strain NG80-2).